A 180-amino-acid polypeptide reads, in one-letter code: Large ribosomal subunit protein uL5 (180 aa).

The protein belongs to the universal ribosomal protein uL5 family. As to quaternary structure, part of the 50S ribosomal subunit; part of the 5S rRNA/L5/L18/L25 subcomplex. Contacts the 5S rRNA and the P site tRNA. Forms a bridge to the 30S subunit in the 70S ribosome.

Its function is as follows. This is one of the proteins that bind and probably mediate the attachment of the 5S RNA into the large ribosomal subunit, where it forms part of the central protuberance. In the 70S ribosome it contacts protein S13 of the 30S subunit (bridge B1b), connecting the 2 subunits; this bridge is implicated in subunit movement. Contacts the P site tRNA; the 5S rRNA and some of its associated proteins might help stabilize positioning of ribosome-bound tRNAs. This chain is Large ribosomal subunit protein uL5, found in Streptococcus mutans serotype c (strain ATCC 700610 / UA159).